Consider the following 154-residue polypeptide: Myoglobin (154 aa).

Positions 2–148 (GLSDDEWHHV…FRNDMASKYK (147 aa)) constitute a Globin domain. His65 contributes to the nitrite binding site. His65 lines the O2 pocket. His94 contacts heme b.

This sequence belongs to the globin family. Monomeric.

The protein localises to the cytoplasm. Its subcellular location is the sarcoplasm. The catalysed reaction is Fe(III)-heme b-[protein] + nitric oxide + H2O = Fe(II)-heme b-[protein] + nitrite + 2 H(+). It catalyses the reaction H2O2 + AH2 = A + 2 H2O. Monomeric heme protein which primary function is to store oxygen and facilitate its diffusion within muscle tissues. Reversibly binds oxygen through a pentacoordinated heme iron and enables its timely and efficient release as needed during periods of heightened demand. Depending on the oxidative conditions of tissues and cells, and in addition to its ability to bind oxygen, it also has a nitrite reductase activity whereby it regulates the production of bioactive nitric oxide. Under stress conditions, like hypoxia and anoxia, it also protects cells against reactive oxygen species thanks to its pseudoperoxidase activity. The polypeptide is Myoglobin (MB) (Graptemys geographica (Common map turtle)).